Reading from the N-terminus, the 593-residue chain is PiggyBac transposable element-derived protein 3 (593 aa).

Disordered regions lie at residues 27–53 (IQPPENATAPVSDEESGDEEGGTINNL) and 69–105 (SDAESDSDDPSYAPKDDSPDEVPSTFTVQQPPPSRRR). The segment covering 38-47 (SDEESGDEEG) has biased composition (acidic residues). Ser86 is subject to Phosphoserine.

In terms of tissue distribution, expressed in heart and oocytes, but not in granulosa cells (at protein level).

Its subcellular location is the nucleus. Its function is as follows. Binds in vitro to PGBD3-related transposable elements, called MER85s; these non-autonomous 140 bp elements are characterized by the presence of PGBD3 terminal inverted repeats and the absence of internal transposase ORF. This chain is PiggyBac transposable element-derived protein 3 (PGBD3), found in Homo sapiens (Human).